The following is a 239-amino-acid chain: Ribitol-5-phosphate cytidylyltransferase (239 aa).

Residues phenylalanine 7 to glycine 10 and glycine 80 to serine 86 contribute to the CTP site.

The protein belongs to the IspD/TarI cytidylyltransferase family. TarI subfamily.

It carries out the reaction D-ribitol 5-phosphate + CTP + H(+) = CDP-L-ribitol + diphosphate. It functions in the pathway cell wall biogenesis; poly(ribitol phosphate) teichoic acid biosynthesis. In terms of biological role, catalyzes the transfer of the cytidylyl group of CTP to D-ribitol 5-phosphate. The polypeptide is Ribitol-5-phosphate cytidylyltransferase (Streptococcus agalactiae serotype III (strain NEM316)).